A 228-amino-acid polypeptide reads, in one-letter code: DNA-binding response regulator MtrA (228 aa).

Positions 7–120 (RILVVDDDAS…ELVARVRARL (114 aa)) constitute a Response regulatory domain. Asp-56 carries the post-translational modification 4-aspartylphosphate. The segment at residues 128 to 227 (AEMLSIADVE…VRGVGYKAGP (100 aa)) is a DNA-binding region (ompR/PhoB-type).

Post-translationally, phosphorylated by MtrB.

In terms of biological role, member of the two-component regulatory system MtrA/MtrB. The chain is DNA-binding response regulator MtrA (mtrA) from Mycobacterium bovis (strain ATCC BAA-935 / AF2122/97).